Here is a 742-residue protein sequence, read N- to C-terminus: Tegument protein UL47 (742 aa).

Residues Met-1–Glu-10 are compositionally biased toward basic and acidic residues. Disordered regions lie at residues Met-1–Leu-128 and Glu-155–Ala-199. The Nuclear localization signal motif lies at Glu-10–Arg-30. Over residues Thr-18–Leu-37 the composition is skewed to low complexity. Residues Arg-38 to Asp-62 show a composition bias toward basic and acidic residues. Acidic residues predominate over residues Glu-63–Ser-88. A Nuclear export signal motif is present at residues Arg-95–Asp-122. The Nuclear export signal motif lies at Leu-485–Leu-495.

It belongs to the alphaherpesvirinae HHV-1 UL47 family. As to quaternary structure, interacts with US3 kinase. Interacts with UL31 and UL34; these interactions seem important for efficient virion nuclear egress. Interacts with UL41/VHS. Post-translationally, phosphorylated by US3. This phosphorylation is required for proper nuclear localization.

The protein localises to the virion tegument. It is found in the host nucleus. Its subcellular location is the host cytoplasm. Functionally, tegument protein that can bind to various RNA transcripts. Plays a role in the attenuation of selective viral and cellular mRNA degradation by modulating the activity of host shutoff RNase UL41/VHS. Also plays a role in the primary envelopment of virions in the perinuclear space, probably by interacting with two nuclear egress proteins UL31 and UL34. In Bos taurus (Bovine), this protein is Tegument protein UL47.